The primary structure comprises 517 residues: Nuclear receptor subfamily 5 group A member 2 (517 aa).

The nuclear receptor DNA-binding region spans 43 to 118; sequence DEMCPVCGDK…VGMKLEAVRA (76 aa). Residues Cys46, Cys49, Cys63, Cys66, Cys82, Cys88, Cys98, and Cys101 each contribute to the Zn(2+) site. 2 NR C4-type zinc fingers span residues 46-66 and 82-101; these read CPVCGDKVSGYHYGLLTCESC and CIENQSCQIDKTQRKRCPYC. Residues 112 to 127 form a C-terminal extension (CTE) region; sequence KLEAVRADRMRGGRNK. The short motif at 128 to 147 is the FTZ-F1 box element; sequence FGPMYKRDRALKQQKKALIR. Residues 182–211 form a disordered region; that stretch reads GLPLSHHHHHHHHHHHHSSSSAGLPPADFD. Residues 186-199 are compositionally biased toward basic residues; it reads SHHHHHHHHHHHHS. Residues 276–515 enclose the NR LBD domain; that stretch reads SFPHLVVELL…NLLIEMLHAK (240 aa). A phospholipid derivative-binding positions include 397–400, Tyr492, and Lys496; that span reads GATL. The interval 504–515 is AF-2; it reads CNNLLIEMLHAK.

This sequence belongs to the nuclear hormone receptor family. NR5 subfamily. As to quaternary structure, monomer; Binds DNA as a monomer.

It is found in the nucleus. The protein resides in the chromosome. In terms of biological role, orphan nuclear receptor that binds DNA as a monomer to the 5'-TCAAGGCCA-3' sequence and controls expression of target genes: regulates key biological processes, such as cholesterol and bile acid synthesis pathways, as well as cartilage, liver and pancreas morphogenesis. Ligand-binding causes conformational change which causes recruitment of coactivators, promoting target gene activation. The specific ligand is unknown, but specific phospholipids, such as phosphatidylethanolamine, phosphatidylserine, dilauroyl phosphatidylcholine and diundecanoyl phosphatidylcholine can act as ligand in vitro. Acts as a pioneer transcription factor, which unwraps target DNA from histones and elicits local opening of closed chromatin. Involved in the formation of connective tissue in lower jaw. Lacks transcription factor activity; unable to activate expression of target genes. In Danio rerio (Zebrafish), this protein is Nuclear receptor subfamily 5 group A member 2.